The primary structure comprises 204 residues: Putative glutathione S-transferase alpha-3 (204 aa).

At Thr2 the chain carries N-acetylthreonine. Residues 2-79 (TKPQLSYFKV…YIASQHDFVG (78 aa)) form the GST N-terminal domain. Glutathione contacts are provided by residues Tyr8, 49–50 (QL), and 63–64 (QS). The GST C-terminal domain maps to 81-202 (TPEEKALVDE…YLKNRPITER (122 aa)).

Belongs to the GST superfamily. Alpha family.

The enzyme catalyses RX + glutathione = an S-substituted glutathione + a halide anion + H(+). In terms of biological role, conjugation of reduced glutathione to a wide number of exogenous and endogenous hydrophobic electrophiles. This Dictyostelium discoideum (Social amoeba) protein is Putative glutathione S-transferase alpha-3 (gsta3).